The following is a 228-amino-acid chain: Cytidylate kinase (228 aa).

Residue 17–25 (GPTASGKGT) coordinates ATP.

Belongs to the cytidylate kinase family. Type 1 subfamily.

The protein resides in the cytoplasm. The catalysed reaction is CMP + ATP = CDP + ADP. The enzyme catalyses dCMP + ATP = dCDP + ADP. This is Cytidylate kinase from Burkholderia vietnamiensis (strain G4 / LMG 22486) (Burkholderia cepacia (strain R1808)).